The chain runs to 319 residues: G-protein coupled receptor 171 (319 aa).

The Extracellular portion of the chain corresponds to 1–21 (MTNSSTFCPVYRDLEPFTYFF). Residue Asn-3 is glycosylated (N-linked (GlcNAc...) asparagine). Residues 22 to 42 (YLVFLIGIIGSCFATWAFIQK) traverse the membrane as a helical segment. The Cytoplasmic segment spans residues 43 to 48 (TTNHRC). A helical transmembrane segment spans residues 49–69 (VSIYLINLLTADFLLTLALPV). The Extracellular portion of the chain corresponds to 70 to 89 (KIIVDLGVAPWKLRIFHCQV). The helical transmembrane segment at 90–110 (TACLIYINMYLSIIFLAFVSI) threads the bilayer. At 111-132 (DRCLQLIHSCKIYRIQEPGFAK) the chain is on the cytoplasmic side. The chain crosses the membrane as a helical span at residues 133–153 (MISAVVWLMVLLIMVPNMVIP). Topologically, residues 154-181 (IKDIKEKSNVGCMEFKKEFGRNWHLLTN) are extracellular. The chain crosses the membrane as a helical span at residues 182–202 (FICVAIFLNFSVIILISNFLA). Residues 203-224 (IRQLYRNRDNTNYPSVKSALLH) lie on the Cytoplasmic side of the membrane. Residues 225-245 (ILLVTASYIICFVPYHAVRIP) form a helical membrane-spanning segment. Over 246–268 (YTLSQTEVISDCSTRIALFKAKE) the chain is Extracellular. The helical transmembrane segment at 269-289 (ATLLLAVSNLCFDPILYYHLS) threads the bilayer. The Cytoplasmic portion of the chain corresponds to 290-319 (KAFRLKVTETFASPKKSKPLEERLRSENDV).

This sequence belongs to the G-protein coupled receptor 1 family. Highly expressed in hypothalamus, including the arcuate nucleus, paraventricular nucleus and dorsomedial hypothalamus. Expressed in periaqueductal gray (at protein level), found primarily in GABAergic neurons and to a lesser extent in glutamatergic neurons. Expressed in T cells and natural killer cells.

It is found in the cell membrane. In terms of biological role, G-protein coupled receptor for Big LEN, a 16-amino acid neuropeptide produced from the precursor protein, proSAAS (encoded by PCSK1N). Acts through a G(i)-alpha-mediated pathway in response to Big LEN. Big LEN-GPR171 system plays an important role in regulating feeding and metabolism. Also plays a role in modulating fear and anxiety-like behaviors in the basolateral amygdala. Big LEN-GPR171 modulates the mu-type opioid receptor signaling and antinociception. Acts as a negative regulator T cell function. In Mus musculus (Mouse), this protein is G-protein coupled receptor 171 (Gpr171).